The primary structure comprises 294 residues: Gap junction delta-3 protein (294 aa).

Residues 1 to 24 lie on the Cytoplasmic side of the membrane; the sequence is MGEWAFLGSLLDAVQLQSPLVGRL. Residues 25-45 traverse the membrane as a helical segment; that stretch reads WLVVMLIFRILVLATVGGAVF. The Extracellular segment spans residues 46–76; the sequence is EDEQEEFVCNTLQPGCRQTCYDRAFPVSHYR. A helical membrane pass occupies residues 77–97; it reads FWLFHILLLSAPPVLFVVYSM. At 98–136 the chain is on the cytoplasmic side; it reads HRAGKEAGGAEAAAQCAPGLPEAQCAPCALRARRARRCY. A helical transmembrane segment spans residues 137-157; sequence LLSVALRLLAELTFLGGQALL. The Extracellular portion of the chain corresponds to 158-188; sequence YGFRVAPHFACAGPPCPHTVDCFVSRPTEKT. A helical transmembrane segment spans residues 189–209; that stretch reads VFVLFYFAVGLLSALLSVAEL. Topologically, residues 210-294 are cytoplasmic; it reads GHLLWKGRPR…PATGRRDLAI (85 aa). Residues 233–294 form a disordered region; it reads EAQKLLPPPP…PATGRRDLAI (62 aa). Over residues 238–250 the composition is skewed to pro residues; sequence LPPPPPPPPPPAL.

Belongs to the connexin family. Delta-type subfamily. In terms of assembly, a connexon is composed of a hexamer of connexins. Interacts with TJP1. As to expression, expressed in vascular smooth muscle cells. Found in heart, colon, and artery (at protein level). Found in cerebral cortex, heart, liver, lung, kidney, spleen and testis.

It localises to the cell membrane. It is found in the cell junction. Its subcellular location is the gap junction. In terms of biological role, one gap junction consists of a cluster of closely packed pairs of transmembrane channels, the connexons, through which materials of low MW diffuse from one cell to a neighboring cell. This is Gap junction delta-3 protein (GJD3) from Homo sapiens (Human).